A 200-amino-acid polypeptide reads, in one-letter code: MSRYRGAVIKIIRRLGELPGLTRKTTTRTSRPGQHGTQARKPSEYAIRLEEKQKLRFNYGLTEKQLLQYVRTAKRIKGSTGEALLQLLEMRLDNVIFRLGMAPTIPAARQLVNHGHIKVNNTRVSIPSYQCKAGDMISIRQHPKSQSIVKNYLQFPGLANMPNHLQIDKDNLTGKINGIIERDWVALNELLIVEYYSRKG.

The interval 20-42 is disordered; sequence GLTRKTTTRTSRPGQHGTQARKP. Positions 23 to 37 are enriched in polar residues; that stretch reads RKTTTRTSRPGQHGT. An S4 RNA-binding domain is found at 90 to 152; the sequence is MRLDNVIFRL…PKSQSIVKNY (63 aa).

The protein belongs to the universal ribosomal protein uS4 family. Part of the 30S ribosomal subunit. Contacts protein S5. The interaction surface between S4 and S5 is involved in control of translational fidelity.

It localises to the plastid. It is found in the chloroplast. Functionally, one of the primary rRNA binding proteins, it binds directly to 16S rRNA where it nucleates assembly of the body of the 30S subunit. In terms of biological role, with S5 and S12 plays an important role in translational accuracy. The protein is Small ribosomal subunit protein uS4c (rps4) of Guillardia theta (Cryptophyte).